A 570-amino-acid polypeptide reads, in one-letter code: 2-succinyl-5-enolpyruvyl-6-hydroxy-3-cyclohexene-1-carboxylate synthase (570 aa).

It belongs to the TPP enzyme family. MenD subfamily. Homodimer. The cofactor is Mg(2+). It depends on Mn(2+) as a cofactor. Requires thiamine diphosphate as cofactor.

It carries out the reaction isochorismate + 2-oxoglutarate + H(+) = 5-enolpyruvoyl-6-hydroxy-2-succinyl-cyclohex-3-ene-1-carboxylate + CO2. It participates in quinol/quinone metabolism; 1,4-dihydroxy-2-naphthoate biosynthesis; 1,4-dihydroxy-2-naphthoate from chorismate: step 2/7. It functions in the pathway quinol/quinone metabolism; menaquinone biosynthesis. Functionally, catalyzes the thiamine diphosphate-dependent decarboxylation of 2-oxoglutarate and the subsequent addition of the resulting succinic semialdehyde-thiamine pyrophosphate anion to isochorismate to yield 2-succinyl-5-enolpyruvyl-6-hydroxy-3-cyclohexene-1-carboxylate (SEPHCHC). In Vibrio cholerae serotype O1 (strain ATCC 39541 / Classical Ogawa 395 / O395), this protein is 2-succinyl-5-enolpyruvyl-6-hydroxy-3-cyclohexene-1-carboxylate synthase.